The following is a 173-amino-acid chain: Putative phosphoesterase GTNG_0743 (173 aa).

His-34 functions as the Proton donor in the catalytic mechanism. 2 short sequence motifs (HXTX) span residues 34–37 (HITL) and 115–118 (HITI). Residue His-115 is the Proton acceptor of the active site.

This sequence belongs to the 2H phosphoesterase superfamily. YjcG family.

This Geobacillus thermodenitrificans (strain NG80-2) protein is Putative phosphoesterase GTNG_0743.